A 236-amino-acid polypeptide reads, in one-letter code: Lipoarabinomannan carrier protein LprG (236 aa).

The first 25 residues, 1–25 (MQTRPRFAVQSLFAILATAAALVAG), serve as a signal peptide directing secretion. Cysteine 26 is lipidated: N-palmitoyl cysteine. The S-diacylglycerol cysteine moiety is linked to residue cysteine 26.

The protein belongs to the LppX/LprAFG lipoprotein family. In terms of assembly, interacts with itself, Ag85A (MSMEG_6398), LppI (MSMEG_3851) and LppK (MSMEG_3904) in vivo.

The protein localises to the cell inner membrane. It is found in the secreted. Its subcellular location is the cell wall. Its function is as follows. Helps membrane protein MSMEG_3069/MSMEI_2992 (P55) transport triacylglycerides (TAG) across the inner cell membrane into the periplasm and probably ultimately to the outer membrane. Binds TAG in its hydrophobic cavity and transfers it between lipid bilayers. TAG probably regulates lipid metabolism and growth regulation and plays a structural role in the outer membrane. Also binds mannosides, lipoarabinomannan and lipomannan and various glycolipids in the same cavity. Required for MSMEG_3069/MSMEI_2992 export activity. Export of ethidium bromide by MSMEG_3069/MSMEI_2992 can be complemented by the equivalent operon from M.tuberculosis (lprG-Rv1410c). Involved in mycolylation. In Mycolicibacterium smegmatis (strain ATCC 700084 / mc(2)155) (Mycobacterium smegmatis), this protein is Lipoarabinomannan carrier protein LprG.